The chain runs to 396 residues: Elongation factor Tu (396 aa).

Positions 10 to 205 (KPHVNVGTIG…AVDEYIPTPE (196 aa)) constitute a tr-type G domain. The interval 19–26 (GHVDHGKT) is G1. A GTP-binding site is contributed by 19 to 26 (GHVDHGKT). Residue Thr-26 coordinates Mg(2+). Residues 61-65 (GITIA) form a G2 region. The interval 82–85 (DCPG) is G3. GTP contacts are provided by residues 82 to 86 (DCPGH) and 137 to 140 (NKTD). The interval 137–140 (NKTD) is G4. Residues 175–177 (SAL) are G5.

The protein belongs to the TRAFAC class translation factor GTPase superfamily. Classic translation factor GTPase family. EF-Tu/EF-1A subfamily. Monomer.

The protein resides in the cytoplasm. The catalysed reaction is GTP + H2O = GDP + phosphate + H(+). In terms of biological role, GTP hydrolase that promotes the GTP-dependent binding of aminoacyl-tRNA to the A-site of ribosomes during protein biosynthesis. The protein is Elongation factor Tu of Salinibacter ruber (strain DSM 13855 / M31).